The chain runs to 576 residues: (E,E)-alpha-farnesene synthase (576 aa).

5 residues coordinate (2E,6E)-farnesyl diphosphate: Arg289, Asp326, Asp330, Arg468, and Asn471. Residues Asp326 and Asp330 each coordinate Mg(2+). The DDXXD motif motif lies at Asp326–Asp330. Residues Asn471, Thr475, and Glu479 each coordinate Mg(2+). The K(+) site is built by Asp484 and Ser487.

Belongs to the terpene synthase family. Tpsb subfamily. As to quaternary structure, monomer. Mg(2+) is required as a cofactor. Requires Mn(2+) as cofactor. It depends on K(+) as a cofactor.

The protein localises to the cytoplasm. It carries out the reaction (2E,6E)-farnesyl diphosphate = (3E,6E)-alpha-farnesene + diphosphate. In terms of biological role, sesquiterpene synthase catalyzing the production of (E,E)-alpha-farnesene, the predominant terpene produced during storage of fruits. Produces all six isomers (E,E)-alpha-farnesene, (Z,E)-alpha-farnesene, (E,Z)-alpha-farnesene, (Z,Z)-alpha-farnesene, (E)-beta-farnesene and (Z)-beta-farnesene from a mix of isomeric forms of the farnesyl diphosphate precursor. Able to convert geranyl diphosphate to the monoterpenes (E)-beta-ocimene, linalool and beta-myrcene. Also has a prenyltransferase activity producing alpha-farnesene directly from geranyl diphosphate and isoprenyl diphosphate. The polypeptide is (E,E)-alpha-farnesene synthase (AFS1) (Malus domestica (Apple)).